The chain runs to 485 residues: MAAVWQQVLAVDARYNAYRTPTFPQFRTQYIRRRSQLLRENAKAGHPPALRRQYLRLRGQLLGQRYGPLSEPGSARAYSNSIVRSSRTTLDRMEDFEDDPRALGARGHRRSVSRGSYQLQAQMNRAVYEDRPPGSVVPTSAAEASRAMAGDTSLSENYAFAGMYHVFDQHVDEAVPRVRFANDDRHRLACCSLDGSISLCQLVPAPPTVLRVLRGHTRGVSDFAWSLSNDILVSTSLDATMRIWASEDGRCIREIPDPDSAELLCCTFQPVNNNLTVVGNAKHNVHVMNISTGKKVKGGSSKLTGRVLALSFDAPGRLLWAGDDRGSVFSFLFDMATGKLTKAKRLVVHEGSPVTSISARSWVSREARDPSLLINACLNKLLLYRVVDNEGTLQLKRSFPIEQSSHPVRSIFCPLMSFRQGACVVTGSEDMCVHFFDVERAAKAAVNKLQGHSAPVLDVSFNCDESLLASSDASGMVIVWRREQK.

N-acetylmethionine is present on Met-1. Residues Ser-70, Ser-74, and Ser-79 each carry the phosphoserine modification. Arg-114 is subject to Asymmetric dimethylarginine; alternate. Residue Arg-114 is modified to Omega-N-methylarginine; alternate. WD repeat units follow at residues 162-202 (GMYH…LCQL), 208-246 (TVLR…IWAS), 250-290 (RCIR…VMNI), 295-335 (KVKG…LFDM), 341-389 (TKAK…VVDN), 394-438 (QLKR…FFDV), and 444-482 (AAVN…VWRR).

Widely expressed.

Its subcellular location is the nucleus. This chain is WD repeat-containing protein 13 (WDR13), found in Homo sapiens (Human).